A 263-amino-acid polypeptide reads, in one-letter code: 5'-nucleotidase SurE (263 aa).

Positions 8, 9, 40, and 98 each coordinate a divalent metal cation.

The protein belongs to the SurE nucleotidase family. A divalent metal cation serves as cofactor.

The protein localises to the cytoplasm. It carries out the reaction a ribonucleoside 5'-phosphate + H2O = a ribonucleoside + phosphate. Functionally, nucleotidase that shows phosphatase activity on nucleoside 5'-monophosphates. This chain is 5'-nucleotidase SurE, found in Gloeobacter violaceus (strain ATCC 29082 / PCC 7421).